The chain runs to 402 residues: NADH dehydrogenase [ubiquinone] 1 alpha subcomplex subunit 9, mitochondrial (402 aa).

The transit peptide at 1 to 43 (MQVVSRRLVQRPLVGGASIYSSSSLRSLYGVSNHLNGTDNCRY) directs the protein to the mitochondrion.

It belongs to the complex I NDUFA9 subunit family. In terms of assembly, complex I is composed of at least 49 different subunits. This a component of the hydrophobic protein fraction. FAD serves as cofactor.

The protein resides in the mitochondrion matrix. Functionally, accessory subunit of the mitochondrial membrane respiratory chain NADH dehydrogenase (Complex I), that is believed not to be involved in catalysis. Complex I functions in the transfer of electrons from NADH to the respiratory chain. The immediate electron acceptor for the enzyme is believed to be ubiquinone. The sequence is that of NADH dehydrogenase [ubiquinone] 1 alpha subcomplex subunit 9, mitochondrial from Arabidopsis thaliana (Mouse-ear cress).